A 622-amino-acid chain; its full sequence is Dopamine beta-hydroxylase (622 aa).

Topologically, residues 1-20 (MQAHLSHQPCWSSLPSPSVR) are cytoplasmic. Residues 21–41 (EAASMYGTAVAIFLVILVAAL) form a helical; Signal-anchor for type II membrane protein membrane-spanning segment. Residues 42–621 (RGSEPPESPF…TVPITTEADA (580 aa)) are Intragranular-facing. Residues 61 to 177 (GILELSWNVS…DTVHLVYGIL (117 aa)) enclose the DOMON domain. N-linked (GlcNAc...) asparagine glycans are attached at residues Asn68 and Asn188. 6 disulfides stabilise this stretch: Cys158/Cys600, Cys236/Cys287, Cys273/Cys299, Cys394/Cys507, Cys398/Cys569, and Cys470/Cys492. Tyr234 is a catalytic residue. Cu(2+) is bound by residues His266 and His267. His337 provides a ligand contact to Cu(2+). The residue at position 350 (Ser350) is a Phosphoserine; by CaMK. The active site involves His416. His416 and His418 together coordinate Cu(2+). The N-linked (GlcNAc...) asparagine glycan is linked to Asn476. Met491 provides a ligand contact to Cu(2+). Asn570 carries N-linked (GlcNAc...) asparagine glycosylation. Positions 594 to 622 (EEPTPRCPIRQTQSPANPTVPITTEADAE) are disordered. The segment covering 603–615 (RQTQSPANPTVPI) has biased composition (polar residues).

Belongs to the copper type II ascorbate-dependent monooxygenase family. As to quaternary structure, homotetramer; composed of two disulfide-linked dimers. Requires Cu(2+) as cofactor. Post-translationally, proteolytic cleavage after the membrane-anchor leads to the release of the soluble form. N-glycosylated. In terms of tissue distribution, detected in adrenal gland secretory granules (at protein level). Detected in adrenal gland.

It is found in the cytoplasmic vesicle. Its subcellular location is the secretory vesicle lumen. The protein localises to the secretory vesicle. It localises to the chromaffin granule lumen. The protein resides in the secretory vesicle membrane. It is found in the chromaffin granule membrane. It carries out the reaction dopamine + 2 L-ascorbate + O2 = (R)-noradrenaline + 2 monodehydro-L-ascorbate radical + H2O. It participates in catecholamine biosynthesis; (R)-noradrenaline biosynthesis; (R)-noradrenaline from dopamine: step 1/1. In terms of biological role, catalyzes the hydroxylation of dopamine to noradrenaline (also known as norepinephrine), and is thus vital for regulation of these neurotransmitters. In Mus musculus (Mouse), this protein is Dopamine beta-hydroxylase (Dbh).